The chain runs to 432 residues: C(50) beta-cyclic carotenoids biosynthesis protein LbtBC (432 aa).

Positions 1 to 140 are beta-cyclase; sequence MTSLYTTLNL…DDDEVRTPER (140 aa). 3 helical membrane passes run 4 to 24, 36 to 56, and 83 to 103; these read LYTTLNLTMSIPVVAVALLAA, LIGVGGALLILMILTAVFDNI, and FAYAVAAAVFVPSVWALLTAS. A disordered region spans residues 111–140; that stretch reads GSPTVSGRGDALLTRAPEPGDDDEVRTPER. The tract at residues 141 to 432 is elongase/hydratase; that stretch reads PGTPGLLTTL…IVLWSVLVWS (292 aa). 7 helical membrane-spanning segments follow: residues 170-190, 252-272, 277-297, 299-319, 350-370, 374-394, and 409-429; these read YFLATGGFDLVGVIGTIFFLV, ESSLWLAASAFAVIAYSAKGL, IPFLDSLTSAFHFVSPAIVGW, IAGAELTGGVWACLIAFMLWG, AAVWFALACYVAAVVVLLAAA, ASGAAFAILPYLATVAAYVGV, and FLVLNMLAGFCVTQIVLWSVL.

Belongs to the UbiA prenyltransferase family. May form a complex with LbtA.

The protein resides in the cell membrane. The catalysed reaction is all-trans-lycopene + dimethylallyl diphosphate + H2O = dihydroisopentenyldehydrorhodopin + diphosphate. The enzyme catalyses isopentenyldehydrorhodopin + dimethylallyl diphosphate + H2O = dihydrobisanhydrobacterioruberin + diphosphate. It functions in the pathway carotenoid biosynthesis. Functionally, involved in the biosynthesis of C(50) beta-cyclic carotenoids. The elongase/hydratase domain catalyzes the elongation of lycopene by attaching a C(5) isoprene unit at C-2, as well as the hydroxylation of the previous end of the molecule. The enzyme acts at both ends of the substrate, and catalyzes the conversion of lycopene to the C(45) intermediate dihydroisopentenyldehydrorhodopin (DH-IDR) and the conversion of isopentenyldehydrorhodopin (IDR) to the C(50) carotenoid dihydrobisanhydrobacterioruberin (DH-BABR). The beta-cyclase domain may produce the C(50) beta-cyclic carotenoid C.p.450 from the C(50) carotenoid dihydrobisanhydrobacterioruberin (DH-BABR). This is C(50) beta-cyclic carotenoids biosynthesis protein LbtBC from Dietzia sp. (strain CQ4).